Here is a 132-residue protein sequence, read N- to C-terminus: Glycine cleavage system H protein (132 aa).

The region spanning 24–106 is the Lipoyl-binding domain; that stretch reads IATIGLSAHA…YEEGWFIKVR (83 aa). K65 is modified (N6-lipoyllysine).

It belongs to the GcvH family. The glycine cleavage system is composed of four proteins: P, T, L and H. (R)-lipoate serves as cofactor.

Functionally, the glycine cleavage system catalyzes the degradation of glycine. The H protein shuttles the methylamine group of glycine from the P protein to the T protein. The sequence is that of Glycine cleavage system H protein from Picosynechococcus sp. (strain ATCC 27264 / PCC 7002 / PR-6) (Agmenellum quadruplicatum).